The sequence spans 434 residues: ATP-dependent protease ATPase subunit HslU (434 aa).

ATP is bound by residues Ile18, 60–65 (GVGKTE), Asp247, Glu312, and Arg384.

The protein belongs to the ClpX chaperone family. HslU subfamily. As to quaternary structure, a double ring-shaped homohexamer of HslV is capped on each side by a ring-shaped HslU homohexamer. The assembly of the HslU/HslV complex is dependent on binding of ATP.

The protein localises to the cytoplasm. Its function is as follows. ATPase subunit of a proteasome-like degradation complex; this subunit has chaperone activity. The binding of ATP and its subsequent hydrolysis by HslU are essential for unfolding of protein substrates subsequently hydrolyzed by HslV. HslU recognizes the N-terminal part of its protein substrates and unfolds these before they are guided to HslV for hydrolysis. The protein is ATP-dependent protease ATPase subunit HslU of Brucella anthropi (strain ATCC 49188 / DSM 6882 / CCUG 24695 / JCM 21032 / LMG 3331 / NBRC 15819 / NCTC 12168 / Alc 37) (Ochrobactrum anthropi).